We begin with the raw amino-acid sequence, 953 residues long: Translation initiation factor IF-2 (953 aa).

2 disordered regions span residues 52-247 and 279-363; these read KASK…LAEL and TKLK…TERK. Basic and acidic residues-rich tracts occupy residues 80–89, 98–111, and 140–188; these read TGSEHVEKTQ, FKAE…EQAA, and QGDK…ENHK. A compositionally biased stretch (polar residues) spans 191-207; the sequence is RFTNQKKQGRQEPQSKS. Over residues 229-247 the composition is skewed to basic and acidic residues; sequence RQSETRFRAQQEAKRLAEL. Polar residues predominate over residues 282–291; the sequence is KSSNISAKST. The segment covering 300–317 has biased composition (basic and acidic residues); it reads ARPEKNRELTHHSQEGQK. Low complexity predominate over residues 322 to 338; sequence SWNSQNQVRNQKNSNWN. Over residues 339–348 the composition is skewed to basic residues; sequence KNKKTKKGKN. Residues 454-623 form the tr-type G domain; sequence ERAPVVTIMG…LLVAEVEELK (170 aa). The tract at residues 463–470 is G1; it reads GHVDHGKT. A GTP-binding site is contributed by 463 to 470; the sequence is GHVDHGKT. The segment at 488–492 is G2; sequence GITQH. The interval 509–512 is G3; sequence DTPG. Residues 509–513 and 563–566 each bind GTP; these read DTPGH and NKID. The G4 stretch occupies residues 563-566; that stretch reads NKID. The tract at residues 599–601 is G5; it reads SAK.

Belongs to the TRAFAC class translation factor GTPase superfamily. Classic translation factor GTPase family. IF-2 subfamily.

It is found in the cytoplasm. Its function is as follows. One of the essential components for the initiation of protein synthesis. Protects formylmethionyl-tRNA from spontaneous hydrolysis and promotes its binding to the 30S ribosomal subunits. Also involved in the hydrolysis of GTP during the formation of the 70S ribosomal complex. In Streptococcus pyogenes serotype M5 (strain Manfredo), this protein is Translation initiation factor IF-2.